Consider the following 227-residue polypeptide: ATP synthase F(0) complex subunit a (227 aa).

The next 6 helical transmembrane spans lie at 14-34 (LLGI…FPTP), 69-89 (WATI…LGLL), 99-119 (LSLN…IGML), 137-157 (LLIP…PLAL), 180-200 (FVLI…LFLL), and 202-222 (ILEV…LSLY).

Belongs to the ATPase A chain family. In terms of assembly, component of the ATP synthase complex composed at least of ATP5F1A/subunit alpha, ATP5F1B/subunit beta, ATP5MC1/subunit c (homooctomer), MT-ATP6/subunit a, MT-ATP8/subunit 8, ATP5ME/subunit e, ATP5MF/subunit f, ATP5MG/subunit g, ATP5MK/subunit k, ATP5MJ/subunit j, ATP5F1C/subunit gamma, ATP5F1D/subunit delta, ATP5F1E/subunit epsilon, ATP5PF/subunit F6, ATP5PB/subunit b, ATP5PD/subunit d, ATP5PO/subunit OSCP. ATP synthase complex consists of a soluble F(1) head domain (subunits alpha(3) and beta(3)) - the catalytic core - and a membrane F(0) domain - the membrane proton channel (subunits c, a, 8, e, f, g, k and j). These two domains are linked by a central stalk (subunits gamma, delta, and epsilon) rotating inside the F1 region and a stationary peripheral stalk (subunits F6, b, d, and OSCP). Interacts with DNAJC30; interaction is direct.

It localises to the mitochondrion inner membrane. It catalyses the reaction H(+)(in) = H(+)(out). In terms of biological role, subunit a, of the mitochondrial membrane ATP synthase complex (F(1)F(0) ATP synthase or Complex V) that produces ATP from ADP in the presence of a proton gradient across the membrane which is generated by electron transport complexes of the respiratory chain. ATP synthase complex consist of a soluble F(1) head domain - the catalytic core - and a membrane F(1) domain - the membrane proton channel. These two domains are linked by a central stalk rotating inside the F(1) region and a stationary peripheral stalk. During catalysis, ATP synthesis in the catalytic domain of F(1) is coupled via a rotary mechanism of the central stalk subunits to proton translocation. With the subunit c (ATP5MC1), forms the proton-conducting channel in the F(0) domain, that contains two crucial half-channels (inlet and outlet) that facilitate proton movement from the mitochondrial intermembrane space (IMS) into the matrix. Protons are taken up via the inlet half-channel and released through the outlet half-channel, following a Grotthuss mechanism. In Squalus acanthias (Spiny dogfish), this protein is ATP synthase F(0) complex subunit a.